Here is a 394-residue protein sequence, read N- to C-terminus: ATP phosphoribosyltransferase regulatory subunit (394 aa).

Belongs to the class-II aminoacyl-tRNA synthetase family. HisZ subfamily. In terms of assembly, heteromultimer composed of HisG and HisZ subunits.

Its subcellular location is the cytoplasm. Its pathway is amino-acid biosynthesis; L-histidine biosynthesis; L-histidine from 5-phospho-alpha-D-ribose 1-diphosphate: step 1/9. Required for the first step of histidine biosynthesis. May allow the feedback regulation of ATP phosphoribosyltransferase activity by histidine. The sequence is that of ATP phosphoribosyltransferase regulatory subunit from Teredinibacter turnerae (strain ATCC 39867 / T7901).